A 215-amino-acid chain; its full sequence is Vesicle-trafficking protein SEC22b-B (215 aa).

Topologically, residues 1–190 (MVLLTMIARL…RSDAKYLNTR (190 aa)) are cytoplasmic. A Longin domain is found at 6-119 (MIARLADGLP…YSFIEFDTYI (114 aa)). The v-SNARE coiled-coil homology domain occupies 134-194 (NLSNINTELQ…KYLNTRSTYA (61 aa)). The chain crosses the membrane as a helical span at residues 191 to 213 (STYAKLAAGGVFFIMLIVYIRFW). Topologically, residues 214–215 (WL) are lumenal.

Belongs to the synaptobrevin family. Component of 2 distinct SNARE complexes.

The protein resides in the endoplasmic reticulum membrane. It localises to the endoplasmic reticulum-Golgi intermediate compartment membrane. Its subcellular location is the golgi apparatus. It is found in the cis-Golgi network membrane. The protein localises to the trans-Golgi network membrane. The protein resides in the melanosome. SNARE involved in targeting and fusion of ER-derived transport vesicles with the Golgi complex as well as Golgi-derived retrograde transport vesicles with the ER. This is Vesicle-trafficking protein SEC22b-B from Danio rerio (Zebrafish).